The following is a 357-amino-acid chain: N-methyltransferase dtpB (357 aa).

Belongs to the methyltransferase superfamily.

Its pathway is alkaloid biosynthesis. Functionally, N-methyltransferase; part of the gene cluster that mediates the biosynthesis of the dimeric diketopiperazine alkaloid ditryptophenaline. The nonribosomal peptide synthase dtpA accepts L-tryptophan and L-phenylalanine as its substrates and forms the phenylalanyl-tryptophanyl cyclic dipeptide product cyclophenylalanyltryptophenyl. The N-methyltransferase dtpB is responsible for the N-methylation of cyclophenylalanyltryptophenyl to yield cyclo-N-methylphenylalanyltryptophenyl. The cytochrome P450 monooxygenase is responsible not only for pyrroloindole ring formation but also for concurrent dimerization of N-methylphenylalanyltryptophanyl diketopiperazine monomers into a homodimeric product. This is N-methyltransferase dtpB from Aspergillus flavus (strain ATCC 200026 / FGSC A1120 / IAM 13836 / NRRL 3357 / JCM 12722 / SRRC 167).